A 591-amino-acid chain; its full sequence is Homeobox domain-containing transcription factor HOB1 (591 aa).

Positions 1 to 15 (MEGKNEDMHTPRGPE) are enriched in basic and acidic residues. Disordered stretches follow at residues 1–37 (MEGK…DMLG) and 148–168 (IAGP…RSPA). The homeobox DNA-binding region spans 176 to 223 (IAILRESYARNPNPDRKELERLAARTGRPWNKIREYFRQRRNKLRGLE). Disordered regions lie at residues 420–463 (DAGL…PRES) and 543–563 (DAIE…ALTE). Over residues 427–441 (QGEEDQPPTVEESDQ) the composition is skewed to acidic residues. Basic and acidic residues predominate over residues 543–560 (DAIERRNAGESKRKRDDA).

The protein localises to the nucleus. General stress-responsive transcription factor that governs multiple stress responses and adaptations. Plays a key role in virulence. Mediates the expression of LAC1, which is the major laccase involved in melanin synthesis. Positively regulates BZP4 induction under conditions of nutrient starvation and basal expression levels of MBS1 and USV101, 3 major transcription factors that independently contribute to melanin production. Also acts as a key regulator of ergosterol gene expression. In Cryptococcus neoformans var. grubii serotype A (strain H99 / ATCC 208821 / CBS 10515 / FGSC 9487) (Filobasidiella neoformans var. grubii), this protein is Homeobox domain-containing transcription factor HOB1.